A 181-amino-acid polypeptide reads, in one-letter code: ADP-ribosylation factor 1-like 2 (181 aa).

The N-myristoyl glycine moiety is linked to residue Gly-2. Residues 3-16 (NVFGSLFKGLFGKR) are important for the stable binding to the membranes. GTP is bound by residues 24-32 (GLDAAGKTT), 126-129 (NKQD), and Ala-160.

Belongs to the small GTPase superfamily. Arf family. As to expression, expressed in hypodermis, intestine, spermatheca, uterus, gonadal sheath, vulva cells, pharynx muscle, body wall muscle, head neurons, ventral nerve cord.

It localises to the golgi apparatus membrane. It catalyses the reaction GTP + H2O = GDP + phosphate + H(+). With respect to regulation, alternates between an inactive GDP-bound form and an active GTP-bound form. Activated by a guanine nucleotide-exchange factor (GEF) and inactivated by GTPase-activating protein (GAP). Its function is as follows. Small GTPase involved in protein trafficking between different compartments. Modulates vesicle budding and uncoating within the Golgi complex. In its GTP-bound form, triggers the recruitment of coatomer proteins to the Golgi membrane. The hydrolysis of ARF1-bound GTP, which is mediated by ARFGAPs proteins, is required for dissociation of coat proteins from Golgi membranes and vesicles. Involved in endoplasmic reticulum dynamics during embryogenesis. Also required for adult germline function. Plays a role in cell shedding during embryogenesis probably by promoting the endocytosis of cell adhesion molecules. During neurogenesis, involved in cell autonomous Q.p neuroblast asymmetric divisions that generate one precursor cell and one apoptotic cell, probably by controlling endocytosis. Plays a role in maintaining mitochondrial morphology. This is ADP-ribosylation factor 1-like 2 from Caenorhabditis elegans.